The primary structure comprises 51 residues: Large ribosomal subunit protein bL33 (51 aa).

Residues 1 to 23 (MREKIKLESSAGTGHFYTTTKNK) are disordered. Positions 10-20 (SAGTGHFYTTT) are enriched in polar residues.

The protein belongs to the bacterial ribosomal protein bL33 family.

The sequence is that of Large ribosomal subunit protein bL33 from Methylobacillus flagellatus (strain ATCC 51484 / DSM 6875 / VKM B-1610 / KT).